The primary structure comprises 369 residues: Flagellar P-ring protein (369 aa).

An N-terminal signal peptide occupies residues 1-23 (MRIASFFTVLLTLLTLNIAPASA).

The protein belongs to the FlgI family. In terms of assembly, the basal body constitutes a major portion of the flagellar organelle and consists of four rings (L,P,S, and M) mounted on a central rod.

It localises to the periplasm. It is found in the bacterial flagellum basal body. Its function is as follows. Assembles around the rod to form the L-ring and probably protects the motor/basal body from shearing forces during rotation. The sequence is that of Flagellar P-ring protein from Pectobacterium carotovorum subsp. carotovorum (strain PC1).